Here is a 160-residue protein sequence, read N- to C-terminus: Cytochrome b6-f complex subunit 4 (160 aa).

3 consecutive transmembrane segments (helical) span residues 36–56 (LLYI…GLSV), 95–115 (LLGV…PFIE), and 131–151 (TVFL…TFPI).

Belongs to the cytochrome b family. PetD subfamily. The 4 large subunits of the cytochrome b6-f complex are cytochrome b6, subunit IV (17 kDa polypeptide, petD), cytochrome f and the Rieske protein, while the 4 small subunits are petG, petL, petM and petN. The complex functions as a dimer.

The protein localises to the plastid. It localises to the chloroplast thylakoid membrane. Functionally, component of the cytochrome b6-f complex, which mediates electron transfer between photosystem II (PSII) and photosystem I (PSI), cyclic electron flow around PSI, and state transitions. The protein is Cytochrome b6-f complex subunit 4 of Stigeoclonium helveticum (Green alga).